A 601-amino-acid chain; its full sequence is DNA topoisomerase I, mitochondrial (601 aa).

The transit peptide at 1–50 (MRVVRLLRLRAALTLLGEVPRRPASRGVPGSRRTQKGSGARWEKEKHEDG) directs the protein to the mitochondrion. Residues 22–48 (RPASRGVPGSRRTQKGSGARWEKEKHE) are disordered. Interaction with DNA regions lie at residues 261-262 (KY), 324-329 (RAGNEK), and 421-423 (TAK). In terms of domain architecture, Topo IB-type catalytic spans 268-601 (CSKLKGETAW…LAMAGEDFEF (334 aa)). Y559 serves as the catalytic O-(3'-phospho-DNA)-tyrosine intermediate.

It belongs to the type IB topoisomerase family. Requires Ca(2+) as cofactor. It depends on Mg(2+) as a cofactor.

The protein localises to the mitochondrion. It catalyses the reaction ATP-independent breakage of single-stranded DNA, followed by passage and rejoining.. Its function is as follows. Releases the supercoiling and torsional tension of DNA introduced during duplication of mitochondrial DNA by transiently cleaving and rejoining one strand of the DNA duplex. Introduces a single-strand break via transesterification at a target site in duplex DNA. The scissile phosphodiester is attacked by the catalytic tyrosine of the enzyme, resulting in the formation of a DNA-(3'-phosphotyrosyl)-enzyme intermediate and the expulsion of a 5'-OH DNA strand. The free DNA strand then rotates around the intact phosphodiester bond on the opposing strand, thus removing DNA supercoils. Finally, in the religation step, the DNA 5'-OH attacks the covalent intermediate to expel the active-site tyrosine and restore the DNA phosphodiester backbone. This Pan troglodytes (Chimpanzee) protein is DNA topoisomerase I, mitochondrial (TOP1MT).